A 267-amino-acid polypeptide reads, in one-letter code: 4-hydroxy-tetrahydrodipicolinate reductase (267 aa).

NAD(+) contacts are provided by residues 9–14 (GASGRM) and D35. Residue R36 coordinates NADP(+). NAD(+) is bound by residues 98-100 (GTT) and 122-125 (ASNF). The active-site Proton donor/acceptor is the H155. A (S)-2,3,4,5-tetrahydrodipicolinate-binding site is contributed by H156. K159 serves as the catalytic Proton donor. 165-166 (GT) contributes to the (S)-2,3,4,5-tetrahydrodipicolinate binding site.

The protein belongs to the DapB family.

It is found in the cytoplasm. It carries out the reaction (S)-2,3,4,5-tetrahydrodipicolinate + NAD(+) + H2O = (2S,4S)-4-hydroxy-2,3,4,5-tetrahydrodipicolinate + NADH + H(+). It catalyses the reaction (S)-2,3,4,5-tetrahydrodipicolinate + NADP(+) + H2O = (2S,4S)-4-hydroxy-2,3,4,5-tetrahydrodipicolinate + NADPH + H(+). It participates in amino-acid biosynthesis; L-lysine biosynthesis via DAP pathway; (S)-tetrahydrodipicolinate from L-aspartate: step 4/4. Its function is as follows. Catalyzes the conversion of 4-hydroxy-tetrahydrodipicolinate (HTPA) to tetrahydrodipicolinate. This chain is 4-hydroxy-tetrahydrodipicolinate reductase, found in Chromobacterium violaceum (strain ATCC 12472 / DSM 30191 / JCM 1249 / CCUG 213 / NBRC 12614 / NCIMB 9131 / NCTC 9757 / MK).